The chain runs to 367 residues: DNA replication and repair protein RecF (367 aa).

30 to 37 provides a ligand contact to ATP; it reads GENAQGKT.

The protein belongs to the RecF family.

The protein resides in the cytoplasm. The RecF protein is involved in DNA metabolism; it is required for DNA replication and normal SOS inducibility. RecF binds preferentially to single-stranded, linear DNA. It also seems to bind ATP. The chain is DNA replication and repair protein RecF from Chlamydia abortus (strain DSM 27085 / S26/3) (Chlamydophila abortus).